Reading from the N-terminus, the 103-residue chain is Histone H4 (103 aa).

Lys6 is modified (N6-acetyl-N6-methyllysine; alternate). An N6-methyllysine; alternate mark is found at Lys6, Lys9, and Lys13. Lys13 is modified (N6-acetyl-N6-methyllysine; alternate). The DNA-binding element occupies 17-21 (KRHRK). Residue Lys92 is modified to N6-glutaryllysine.

The protein belongs to the histone H4 family. In terms of assembly, the nucleosome is a histone octamer containing two molecules each of H2A, H2B, H3 and H4 assembled in one H3-H4 heterotetramer and two H2A-H2B heterodimers. The octamer wraps approximately 147 bp of DNA. In terms of processing, glutarylation at Lys-92 (H4K91glu) destabilizes nucleosomes by promoting dissociation of the H2A-H2B dimers from nucleosomes.

The protein resides in the nucleus. Its subcellular location is the chromosome. Its function is as follows. Core component of nucleosome. Nucleosomes wrap and compact DNA into chromatin, limiting DNA accessibility to the cellular machineries which require DNA as a template. Histones thereby play a central role in transcription regulation, DNA repair, DNA replication and chromosomal stability. DNA accessibility is regulated via a complex set of post-translational modifications of histones, also called histone code, and nucleosome remodeling. The chain is Histone H4 (ahsb4) from Blastobotrys adeninivorans (Yeast).